We begin with the raw amino-acid sequence, 379 residues long: Protein RecA (379 aa).

The tract at residues 1-24 (MSVDVKSAQSSKSDSLQAEPRPGE) is disordered. The span at 7–16 (SAQSSKSDSL) shows a compositional bias: polar residues. Residue 84-91 (GPESSGKT) participates in ATP binding.

The protein belongs to the RecA family.

The protein resides in the cytoplasm. Can catalyze the hydrolysis of ATP in the presence of single-stranded DNA, the ATP-dependent uptake of single-stranded DNA by duplex DNA, and the ATP-dependent hybridization of homologous single-stranded DNAs. It interacts with LexA causing its activation and leading to its autocatalytic cleavage. This is Protein RecA from Prochlorococcus marinus (strain MIT 9303).